Reading from the N-terminus, the 344-residue chain is MLQALLDSKDFLALTLAHPEQFDGEFSFNLGDHTQVEVWDTGVIVFEPIQNEGKDIVLSCGVHGNETAPIELCNSLIKQLLQQKIIAKQRTLFLIGNPLAINNGTRIIDENMNRLFSGEHSNPPGLVNPERVRAKKLEAYVDRFYTTVADGRQRIHYDLHTAMRASKHEKFAIYPYRPGRAFSGEQIMFLAASGVDTVLFHHEPTTTFSYFSSERYGADAFTIELGKVYPMGQNDMTRFIATHEMFMRLITAKPLELDAFDADKVNLYQVCRVINKHFDDFEFTFATDVENFRSFPKGFVLAREGGKEIKVEHEFESVVFPNAKVPIGNRTVICLIPAVNADVR.

3 residues coordinate Zn(2+): H63, E66, and H160. Residue E224 is part of the active site.

It belongs to the AspA/AstE family. Succinylglutamate desuccinylase subfamily. The cofactor is Zn(2+).

The enzyme catalyses N-succinyl-L-glutamate + H2O = L-glutamate + succinate. It participates in amino-acid degradation; L-arginine degradation via AST pathway; L-glutamate and succinate from L-arginine: step 5/5. Functionally, transforms N(2)-succinylglutamate into succinate and glutamate. This chain is Succinylglutamate desuccinylase, found in Shewanella sp. (strain W3-18-1).